The chain runs to 934 residues: Protocadherin gamma-C3 (934 aa).

The first 31 residues, methionine 1–threonine 31, serve as a signal peptide directing secretion. Cadherin domains lie at valine 32–phenylalanine 135, proline 136–phenylalanine 244, asparagine 245–isoleucine 352, threonine 353–serine 457, serine 458–valine 567, and proline 572–glutamate 685. The Extracellular portion of the chain corresponds to valine 32–tyrosine 693. 6 N-linked (GlcNAc...) asparagine glycosylation sites follow: asparagine 245, asparagine 424, asparagine 478, asparagine 550, asparagine 615, and asparagine 689. A helical membrane pass occupies residues leucine 694–isoleucine 714. Over phenylalanine 715–lysine 934 the chain is Cytoplasmic. Disordered stretches follow at residues glutamate 804–asparagine 843 and alanine 904–lysine 934. The span at alanine 812–asparagine 843 shows a compositional bias: polar residues. The segment covering asparagine 924–lysine 934 has biased composition (basic residues).

It localises to the cell membrane. Functionally, potential calcium-dependent cell-adhesion protein. May be involved in the establishment and maintenance of specific neuronal connections in the brain. This chain is Protocadherin gamma-C3 (PCDHGC3), found in Homo sapiens (Human).